Here is a 197-residue protein sequence, read N- to C-terminus: Imidazoleglycerol-phosphate dehydratase (197 aa).

This sequence belongs to the imidazoleglycerol-phosphate dehydratase family.

Its subcellular location is the cytoplasm. It carries out the reaction D-erythro-1-(imidazol-4-yl)glycerol 3-phosphate = 3-(imidazol-4-yl)-2-oxopropyl phosphate + H2O. It functions in the pathway amino-acid biosynthesis; L-histidine biosynthesis; L-histidine from 5-phospho-alpha-D-ribose 1-diphosphate: step 6/9. The polypeptide is Imidazoleglycerol-phosphate dehydratase (Rhodopseudomonas palustris (strain BisB5)).